The chain runs to 1063 residues: Error-prone DNA polymerase (1063 aa).

Belongs to the DNA polymerase type-C family. DnaE2 subfamily.

The protein localises to the cytoplasm. The enzyme catalyses DNA(n) + a 2'-deoxyribonucleoside 5'-triphosphate = DNA(n+1) + diphosphate. Functionally, DNA polymerase involved in damage-induced mutagenesis and translesion synthesis (TLS). It is not the major replicative DNA polymerase. This Burkholderia mallei (strain ATCC 23344) protein is Error-prone DNA polymerase.